The primary structure comprises 122 residues: Small ribosomal subunit protein uS13 (122 aa).

Positions 94–122 (KKLPVRGQRTHTNARTRKGPAKPIAGKKK) are disordered.

This sequence belongs to the universal ribosomal protein uS13 family. In terms of assembly, part of the 30S ribosomal subunit. Forms a loose heterodimer with protein S19. Forms two bridges to the 50S subunit in the 70S ribosome.

Located at the top of the head of the 30S subunit, it contacts several helices of the 16S rRNA. In the 70S ribosome it contacts the 23S rRNA (bridge B1a) and protein L5 of the 50S subunit (bridge B1b), connecting the 2 subunits; these bridges are implicated in subunit movement. Contacts the tRNAs in the A and P-sites. The chain is Small ribosomal subunit protein uS13 from Hyphomonas neptunium (strain ATCC 15444).